Consider the following 568-residue polypeptide: Urease subunit alpha (568 aa).

The Urease domain occupies 130–568; that stretch reads GGIDTHIHFI…LPMAQRYFLF (439 aa). Ni(2+)-binding residues include histidine 135, histidine 137, and lysine 218. Residue lysine 218 is modified to N6-carboxylysine. Histidine 220 is a substrate binding site. Residues histidine 247 and histidine 273 each contribute to the Ni(2+) site. Histidine 321 (proton donor) is an active-site residue. Residue aspartate 361 coordinates Ni(2+).

This sequence belongs to the metallo-dependent hydrolases superfamily. Urease alpha subunit family. Heterotrimer of UreA (gamma), UreB (beta) and UreC (alpha) subunits. Three heterotrimers associate to form the active enzyme. The cofactor is Ni cation. In terms of processing, carboxylation allows a single lysine to coordinate two nickel ions.

It is found in the cytoplasm. The enzyme catalyses urea + 2 H2O + H(+) = hydrogencarbonate + 2 NH4(+). It functions in the pathway nitrogen metabolism; urea degradation; CO(2) and NH(3) from urea (urease route): step 1/1. The polypeptide is Urease subunit alpha (Burkholderia orbicola (strain MC0-3)).